The sequence spans 308 residues: D-2-hydroxyacid dehydrogenase (308 aa).

NAD(+) is bound by residues Thr145–Leu146, Val224–Arg226, and Asp250. The active site involves Arg226. Glu255 is a catalytic residue. The Proton donor role is filled by His274. His274 to Ala277 serves as a coordination point for NAD(+).

This sequence belongs to the D-isomer specific 2-hydroxyacid dehydrogenase family. In terms of assembly, homotetramer.

Catalyzes the stereospecific NAD(P)H-dependent reduction of 2-ketocarboxylic acids into the corresponding D-2-hydroxycarboxylic acids. Can use both NADPH or NADH as reductant, displaying a marked preference for NADPH over NADH. Shows a broad substrate specificity, although it displays a marked preference for the 2-ketocarboxylic acids having an unbranched chain of 4-5 carbon atoms. In Haloferax mediterranei (strain ATCC 33500 / DSM 1411 / JCM 8866 / NBRC 14739 / NCIMB 2177 / R-4) (Halobacterium mediterranei), this protein is D-2-hydroxyacid dehydrogenase (ddh).